The following is a 504-amino-acid chain: Maturase K (504 aa).

This sequence belongs to the intron maturase 2 family. MatK subfamily.

It localises to the plastid. It is found in the chloroplast. Usually encoded in the trnK tRNA gene intron. Probably assists in splicing its own and other chloroplast group II introns. The polypeptide is Maturase K (Fagus hayatae (Formosan elm)).